Consider the following 263-residue polypeptide: Small ribosomal subunit protein eS1 (263 aa).

Residues 235 to 254 (HGEGGGGKREAGDKSERPEG) are compositionally biased toward basic and acidic residues. The disordered stretch occupies residues 235–263 (HGEGGGGKREAGDKSERPEGYEPPVQESV).

Belongs to the eukaryotic ribosomal protein eS1 family. As to quaternary structure, component of the small ribosomal subunit. Mature ribosomes consist of a small (40S) and a large (60S) subunit. The 40S subunit contains about 33 different proteins and 1 molecule of RNA (18S). The 60S subunit contains about 49 different proteins and 3 molecules of RNA (28S, 5.8S and 5S).

The protein localises to the cytoplasm. This chain is Small ribosomal subunit protein eS1, found in Bombyx mandarina (Wild silk moth).